We begin with the raw amino-acid sequence, 277 residues long: Large ribosomal subunit protein uL2c (277 aa).

Residues N226–P249 form a disordered region. A compositionally biased stretch (basic and acidic residues) spans D229 to P246.

It belongs to the universal ribosomal protein uL2 family. Part of the 50S ribosomal subunit.

The protein localises to the plastid. The protein resides in the chloroplast. The chain is Large ribosomal subunit protein uL2c (rpl2) from Physcomitrium patens (Spreading-leaved earth moss).